The sequence spans 148 residues: UPF0178 protein SH2212 (148 aa).

The protein belongs to the UPF0178 family.

This chain is UPF0178 protein SH2212, found in Staphylococcus haemolyticus (strain JCSC1435).